A 146-amino-acid polypeptide reads, in one-letter code: HTH-type transcriptional regulator NsrR (146 aa).

The region spanning 2–133 is the HTH rrf2-type domain; it reads KLTNYTDYSL…DKYTLRDLVK (132 aa). Positions 28–51 form a DNA-binding region, H-T-H motif; it reads IKQIAETYSISKNHLMKVIYRLGQ. 3 residues coordinate [2Fe-2S] cluster: cysteine 92, cysteine 100, and cysteine 106.

[2Fe-2S] cluster serves as cofactor.

In terms of biological role, nitric oxide-responsive transcriptional regulator. It represses the expression of flavohemoprotein hmp and the nitrite reductase nasD. Probably plays a role in the up-regulation of the resDE regulon in the presence of nitric oxide. This is HTH-type transcriptional regulator NsrR (nsrR) from Bacillus subtilis (strain 168).